We begin with the raw amino-acid sequence, 736 residues long: Gingipain R2 (736 aa).

The signal sequence occupies residues 1 to 24 (MKKNFSRIVSIVAFSSLLGGMAFA). Residues 25–229 (QPAERGRNPQ…SVFMNYEATR (205 aa)) constitute a propeptide that is removed on maturation. Ca(2+) is bound by residues D307, V329, D332, Y334, E336, E390, and H395. H440 functions as the Proton donor in the catalytic mechanism. Residue C473 is the Nucleophile of the active site. Ca(2+) is bound by residues F478, E487, D521, E522, E525, H531, D613, and E639.

It belongs to the peptidase C25 family.

The protein resides in the secreted. It catalyses the reaction Hydrolysis of proteins and small molecule substrates, with a preference for Arg in P1.. Its activity is regulated as follows. Inhibited by human histatin-3 1/24 (histatin-5). In terms of biological role, thiol protease. Acts synergistically with RgpA to catalyze the maturation of fimbrial subunits, such as FimA. Its proteolytic activity is a major factor in both periodontal tissue destruction and in evasion of host defense mechanisms. In Porphyromonas gingivalis (strain ATCC BAA-308 / W83), this protein is Gingipain R2 (rgpB).